The chain runs to 56 residues: UPF0391 membrane protein Rru_A0119 (56 aa).

The next 2 helical transmembrane spans lie at 4–24 (WALIFLVVAVVAALFGFGGIA) and 30–50 (IAQILFFVFLVLLVISLIMHF).

Belongs to the UPF0391 family.

The protein resides in the cell membrane. The polypeptide is UPF0391 membrane protein Rru_A0119 (Rhodospirillum rubrum (strain ATCC 11170 / ATH 1.1.1 / DSM 467 / LMG 4362 / NCIMB 8255 / S1)).